The primary structure comprises 442 residues: F-box/kelch-repeat protein OR23 (442 aa).

An F-box domain is found at 37–84; it reads TLIPGLSNDVGRLILSFVPYPHISRIKSTCKSWYAFLSSKTLISLRHS. Kelch repeat units follow at residues 93-139, 145-200, 204-257, 269-328, 330-377, and 390-437; these read LSHL…NFVA, YVYV…AMPG, RIIV…LVEN, EFWV…KIVA, DCGK…ALNG, and LMDT…TTVM.

This Arabidopsis thaliana (Mouse-ear cress) protein is F-box/kelch-repeat protein OR23 (OR23).